The primary structure comprises 301 residues: 4-hydroxy-tetrahydrodipicolinate synthase (301 aa).

Thr-46 contributes to the pyruvate binding site. Tyr-135 (proton donor/acceptor) is an active-site residue. The Schiff-base intermediate with substrate role is filled by Lys-163. Ile-205 contributes to the pyruvate binding site.

This sequence belongs to the DapA family. In terms of assembly, homotetramer; dimer of dimers.

Its subcellular location is the cytoplasm. It catalyses the reaction L-aspartate 4-semialdehyde + pyruvate = (2S,4S)-4-hydroxy-2,3,4,5-tetrahydrodipicolinate + H2O + H(+). It participates in amino-acid biosynthesis; L-lysine biosynthesis via DAP pathway; (S)-tetrahydrodipicolinate from L-aspartate: step 3/4. Catalyzes the condensation of (S)-aspartate-beta-semialdehyde [(S)-ASA] and pyruvate to 4-hydroxy-tetrahydrodipicolinate (HTPA). The sequence is that of 4-hydroxy-tetrahydrodipicolinate synthase from Lacticaseibacillus casei (strain BL23) (Lactobacillus casei).